The sequence spans 367 residues: Protein SGT1 homolog (367 aa).

3 TPR repeats span residues 6–39, 40–73, and 75–107; these read ASDL…SPAT, AELY…DPSM, and KAYL…ASGD. The region spanning 165 to 254 is the CS domain; that stretch reads KPKYRHDFYN…AEQITWTSLD (90 aa). Disordered stretches follow at residues 261–289 and 347–367; these read AVPQ…DWDK and VGSK…KWEY. The 91-residue stretch at 277-367 folds into the SGS domain; that stretch reads SYPSSKSKKD…DGMELKKWEY (91 aa).

This sequence belongs to the SGT1 family. As to quaternary structure, interacts (via CS domain) with RAR1 (via CHORD 2 domain). Interacts with RAD6. In terms of tissue distribution, expressed in roots, root tips, shoot apical meristem (SAM), young leaves, flag leaves and ears.

The protein resides in the cytoplasm. It is found in the nucleus. In terms of biological role, involved in basal disease resistance to bacterial blight (X.oryzae). May act as positive regulator of basal defense. Probably required for SCF-mediated ubiquitination, by coupling HSP90 to SCF complex for ubiquitination of HSP90 client proteins. The chain is Protein SGT1 homolog from Oryza sativa subsp. japonica (Rice).